The following is a 255-amino-acid chain: NAD kinase (255 aa).

The active-site Proton acceptor is aspartate 44. NAD(+)-binding positions include 44 to 45 (DG), 114 to 115 (NE), aspartate 144, alanine 152, and 155 to 160 (TAYNLS).

This sequence belongs to the NAD kinase family. It depends on a divalent metal cation as a cofactor.

It is found in the cytoplasm. The enzyme catalyses NAD(+) + ATP = ADP + NADP(+) + H(+). Its function is as follows. Involved in the regulation of the intracellular balance of NAD and NADP, and is a key enzyme in the biosynthesis of NADP. Catalyzes specifically the phosphorylation on 2'-hydroxyl of the adenosine moiety of NAD to yield NADP. The chain is NAD kinase from Hyphomonas neptunium (strain ATCC 15444).